We begin with the raw amino-acid sequence, 37 residues long: Photosystem I reaction center subunit VIII (37 aa).

A helical membrane pass occupies residues 9–29 (SIFVPLVGLVFPAIAMASLFL).

This sequence belongs to the PsaI family.

Its subcellular location is the plastid. It is found in the chloroplast thylakoid membrane. Functionally, may help in the organization of the PsaL subunit. The chain is Photosystem I reaction center subunit VIII from Cucumis sativus (Cucumber).